The primary structure comprises 201 residues: Small ribosomal subunit protein uS4c (201 aa).

A disordered region spans residues 20–44 (GLTSKRPRAGSDLRNQSRSGKKSQY). The S4 RNA-binding domain occupies 89–152 (MRLDNILFRL…NSRTLVQNLL (64 aa)).

It belongs to the universal ribosomal protein uS4 family. Part of the 30S ribosomal subunit. Contacts protein S5. The interaction surface between S4 and S5 is involved in control of translational fidelity.

Its subcellular location is the plastid. The protein localises to the chloroplast. Functionally, one of the primary rRNA binding proteins, it binds directly to 16S rRNA where it nucleates assembly of the body of the 30S subunit. With S5 and S12 plays an important role in translational accuracy. This Arabis hirsuta (Hairy rock-cress) protein is Small ribosomal subunit protein uS4c (rps4).